We begin with the raw amino-acid sequence, 589 residues long: Mitoguardin 2 (589 aa).

2 helical membrane-spanning segments follow: residues 11-31 and 42-62; these read IIQA…TTFG and PGLR…ALAA. Positions 87–134 are disordered; the sequence is VPGSVLPVRRSSSAKKGYSRSRVQSPSSKSNDTLSGISSLDPSKHSSS. Low complexity-rich tracts occupy residues 106–116 and 123–134; these read RSRVQSPSSKS and ISSLDPSKHSSS.

Belongs to the mitoguardin family. Homodimer and heterodimer; forms heterodimers with miga1.

Its subcellular location is the mitochondrion outer membrane. Its function is as follows. Regulator of mitochondrial fusion: acts by forming homo- and heterodimers at the mitochondrial outer membrane and facilitating the formation of pld6/MitoPLD dimers. May act by regulating phospholipid metabolism via pld6/MitoPLD. This is Mitoguardin 2 from Xenopus laevis (African clawed frog).